The sequence spans 407 residues: Nicotinate phosphoribosyltransferase (407 aa).

The residue at position 228 (H228) is a Phosphohistidine; by autocatalysis.

The protein belongs to the NAPRTase family. In terms of processing, transiently phosphorylated on a His residue during the reaction cycle. Phosphorylation strongly increases the affinity for substrates and increases the rate of nicotinate D-ribonucleotide production. Dephosphorylation regenerates the low-affinity form of the enzyme, leading to product release.

The catalysed reaction is nicotinate + 5-phospho-alpha-D-ribose 1-diphosphate + ATP + H2O = nicotinate beta-D-ribonucleotide + ADP + phosphate + diphosphate. It functions in the pathway cofactor biosynthesis; NAD(+) biosynthesis; nicotinate D-ribonucleotide from nicotinate: step 1/1. With respect to regulation, 100-fold more active in the presence of saturating ATP. Its function is as follows. Catalyzes the synthesis of beta-nicotinate D-ribonucleotide from nicotinate and 5-phospho-D-ribose 1-phosphate at the expense of ATP. Functions in the deamidating salvage pathway for production of NAD from nicotinamide. Displays a strict preference for nicotinate over nicotinamide substrate. This is Nicotinate phosphoribosyltransferase from Acinetobacter baylyi (strain ATCC 33305 / BD413 / ADP1).